The following is a 1165-amino-acid chain: Disease resistance protein RPS4B (1165 aa).

Positions Pro12 to Leu174 constitute a TIR domain. Glu86 is an active-site residue. In terms of domain architecture, NB-ARC spans Lys211–Gln474. One copy of the LRR 1 repeat lies at Ser592 to Pro613. The LRR 2; degenerate repeat unit spans residues Leu614–Asp635. 6 LRR repeats span residues Pro636–Thr659, Asn684–Asn703, Leu704–Pro725, Glu726–Leu748, Leu772–Lys794, and Ser795–Tyr818. Residues Leu819–Gln836 form an LRR 9; degenerate repeat. Residues Val837–Tyr863 form an LRR 10 repeat.

The protein belongs to the disease resistance TIR-NB-LRR family. As to quaternary structure, interacts with RRS1B. RPS4B-RRS1B heterodimer interacts with the bacterial effectors AvrRps4 and PopP2.

It is found in the nucleus. The enzyme catalyses NAD(+) + H2O = ADP-D-ribose + nicotinamide + H(+). In terms of biological role, disease resistance (R) protein that specifically recognizes the AvrRps4 type III effector avirulence protein from P.syringae. Heterodimerization with RRS1B is required to form a functional complex to recognize AvrRps4 and to mediate the hypersensitive response. The sequence is that of Disease resistance protein RPS4B from Arabidopsis thaliana (Mouse-ear cress).